Here is a 107-residue protein sequence, read N- to C-terminus: Phosphoribosyl-ATP pyrophosphatase (107 aa).

Belongs to the PRA-PH family.

It localises to the cytoplasm. The enzyme catalyses 1-(5-phospho-beta-D-ribosyl)-ATP + H2O = 1-(5-phospho-beta-D-ribosyl)-5'-AMP + diphosphate + H(+). It functions in the pathway amino-acid biosynthesis; L-histidine biosynthesis; L-histidine from 5-phospho-alpha-D-ribose 1-diphosphate: step 2/9. The sequence is that of Phosphoribosyl-ATP pyrophosphatase from Nitrobacter hamburgensis (strain DSM 10229 / NCIMB 13809 / X14).